Reading from the N-terminus, the 93-residue chain is Acylphosphatase (93 aa).

An Acylphosphatase-like domain is found at 3 to 93 (KQQYFISGKV…FQFNNFKIYY (91 aa)). Residues arginine 18 and asparagine 36 contribute to the active site.

It belongs to the acylphosphatase family.

It carries out the reaction an acyl phosphate + H2O = a carboxylate + phosphate + H(+). The protein is Acylphosphatase (acyP) of Borrelia garinii subsp. bavariensis (strain ATCC BAA-2496 / DSM 23469 / PBi) (Borreliella bavariensis).